Here is a 203-residue protein sequence, read N- to C-terminus: Small ribosomal subunit protein uS4 (203 aa).

Residues 93-156 (QRLDNVVFRL…MKVPAILEAV (64 aa)) enclose the S4 RNA-binding domain.

The protein belongs to the universal ribosomal protein uS4 family. Part of the 30S ribosomal subunit. Contacts protein S5. The interaction surface between S4 and S5 is involved in control of translational fidelity.

One of the primary rRNA binding proteins, it binds directly to 16S rRNA where it nucleates assembly of the body of the 30S subunit. Its function is as follows. With S5 and S12 plays an important role in translational accuracy. In Lactococcus lactis subsp. lactis (strain IL1403) (Streptococcus lactis), this protein is Small ribosomal subunit protein uS4.